Here is a 564-residue protein sequence, read N- to C-terminus: MHSYDYLLLLAFFAIVLLPAPWLGRFYYKVMEGQRTWLSPILGPVERGCYRLSGVNADQEQNWKQYTLALLAFNLAGFLLLFAVLLLQGSLPLNPQHLPGQEWSLAFNTAVSFMTNTNWQSYSGEASVSYLTQMIGLTVQNFVSAATGLAVLVALSRGIARRSAGTLGNFWVDLTRATLYGLLPLCLVLALLLVWQGVPQTFADYVHAVTLQGTDQTIPLGPAASQIAIKQLGTNGGGFFGVNSAHPFENPTAWSNLFEVASIILIPVALVFTFGHYVKDLRQSRAIIACMLALFLIGGSTALWSEHQPNPALESAQVRQSAPLEGKESRFGTTGSVLWTVTTTSASNGSVNAMHDSLNPLTGMVAMVNMMLGEVIFGGVGAGLYGMLLFVLIAVFLAGLMIGRTPEYLGKKLQAREVQLLVATLLVMPVGVLILGAIAASLPGPAGAVSNPGAHGFSQLLYAYTSGTANNGSAFAGFGANTTFHNVMIGLAMLIGRFGYILPVLALAGSLAAKKSAPQGLNSFPTHGPLFTTLLLLTILLVGGLTFLPTLALGPIAEHLSLGF.

10 consecutive transmembrane segments (helical) span residues 4-24, 67-87, 135-155, 179-199, 258-278, 286-306, 382-402, 420-440, 487-507, and 534-554; these read YDYL…PWLG, TLAL…VLLL, IGLT…LVAL, LYGL…QGVP, FEVA…GHYV, AIIA…LWSE, AGLY…GLMI, LLVA…AIAA, VMIG…VLAL, and LLLL…LALG.

This sequence belongs to the KdpA family. In terms of assembly, the system is composed of three essential subunits: KdpA, KdpB and KdpC.

The protein localises to the cell inner membrane. Part of the high-affinity ATP-driven potassium transport (or Kdp) system, which catalyzes the hydrolysis of ATP coupled with the electrogenic transport of potassium into the cytoplasm. This subunit binds the periplasmic potassium ions and delivers the ions to the membrane domain of KdpB through an intramembrane tunnel. The protein is Potassium-transporting ATPase potassium-binding subunit of Pseudomonas entomophila (strain L48).